We begin with the raw amino-acid sequence, 970 residues long: Vacuolar membrane protease (970 aa).

The segment covering 1–12 (MTTADSNSSATR) has biased composition (polar residues). Residues 1 to 35 (MTTADSNSSATRGSHEMADGSNRVPNDEPYHRKSP) form a disordered region. Topologically, residues 1–56 (MTTADSNSSATRGSHEMADGSNRVPNDEPYHRKSPESCENANFFVRAMRASFGYRK) are cytoplasmic. Basic and acidic residues predominate over residues 25-35 (PNDEPYHRKSP). Residues 57-77 (TSLTILVFLSVIATVLLSYYD) traverse the membrane as a helical segment. The Vacuolar segment spans residues 78–397 (SSLEFSVSLP…FVVPMTFVFG (320 aa)). Asparagine 146 and asparagine 173 each carry an N-linked (GlcNAc...) asparagine glycan. The Zn(2+) site is built by histidine 187 and aspartate 199. Catalysis depends on glutamate 234, which acts as the Proton acceptor. Glutamate 235, glutamate 260, and histidine 333 together coordinate Zn(2+). The chain crosses the membrane as a helical span at residues 398–418 (VNVLLMVLVPLVSLISLALIF). Residues 419–423 (AHRKW) lie on the Cytoplasmic side of the membrane. Residues 424–444 (SVSLVTFFKFPLSFILSIFLL) form a helical membrane-spanning segment. Residues 445–465 (DNFSSWFVVSVNNFLPNSSAG) lie on the Vacuolar side of the membrane. Asparagine 446 and asparagine 461 each carry an N-linked (GlcNAc...) asparagine glycan. The chain crosses the membrane as a helical span at residues 466–486 (IIALTYFSFFVLANYLLLNGI). The Cytoplasmic portion of the chain corresponds to 487–502 (NLLFWKFKGTRHDEKL). Residues 503–523 (VVILQISFMFWVSLIWSTANI) form a helical membrane-spanning segment. At 524–535 (AKSQFNGEHSGE) the chain is on the vacuolar side. Residues 536-556 (FLLTLLYILQAAGGVFGLLCW) form a helical membrane-spanning segment. At 557-620 (LFKRSRTVHT…PTKHYSYDWS (64 aa)) the chain is on the cytoplasmic side. Residues 621-641 (IQFLFIVPISSFLSYNYGWLI) form a helical membrane-spanning segment. Residues 642–658 (LEGLKKTLQESATSEYL) are Vacuolar-facing. The chain crosses the membrane as a helical span at residues 659–679 (VFRALKLLAVVVAVPYLPFIF). Topologically, residues 680–683 (KVNR) are cytoplasmic. The helical transmembrane segment at 684 to 704 (IVFLVTIFLFVYGLGAIVISE) threads the bilayer. Residues 705-970 (PFTEANPLKL…LVNVKKSVLV (266 aa)) lie on the Vacuolar side of the membrane. Residues asparagine 738, asparagine 797, and asparagine 877 are each glycosylated (N-linked (GlcNAc...) asparagine).

Belongs to the peptidase M28 family. The cofactor is Zn(2+).

The protein resides in the vacuole membrane. In terms of biological role, may be involved in vacuolar sorting and osmoregulation. The sequence is that of Vacuolar membrane protease from Meyerozyma guilliermondii (strain ATCC 6260 / CBS 566 / DSM 6381 / JCM 1539 / NBRC 10279 / NRRL Y-324) (Yeast).